The chain runs to 242 residues: Ubiquinone biosynthesis O-methyltransferase (242 aa).

Residues arginine 44, glycine 64, aspartate 85, and methionine 129 each contribute to the S-adenosyl-L-methionine site.

This sequence belongs to the methyltransferase superfamily. UbiG/COQ3 family.

The catalysed reaction is a 3-demethylubiquinol + S-adenosyl-L-methionine = a ubiquinol + S-adenosyl-L-homocysteine + H(+). The enzyme catalyses a 3-(all-trans-polyprenyl)benzene-1,2-diol + S-adenosyl-L-methionine = a 2-methoxy-6-(all-trans-polyprenyl)phenol + S-adenosyl-L-homocysteine + H(+). It participates in cofactor biosynthesis; ubiquinone biosynthesis. In terms of biological role, O-methyltransferase that catalyzes the 2 O-methylation steps in the ubiquinone biosynthetic pathway. The sequence is that of Ubiquinone biosynthesis O-methyltransferase from Klebsiella pneumoniae (strain 342).